The chain runs to 99 residues: UPF0045 protein MTH_1187 (99 aa).

This sequence belongs to the UPF0045 family. Homotetramer.

The polypeptide is UPF0045 protein MTH_1187 (Methanothermobacter thermautotrophicus (strain ATCC 29096 / DSM 1053 / JCM 10044 / NBRC 100330 / Delta H) (Methanobacterium thermoautotrophicum)).